The sequence spans 302 residues: Glutaminase (302 aa).

Substrate is bound by residues Ser-61, Asn-111, Glu-155, Asn-162, Tyr-186, Tyr-238, and Val-256.

Belongs to the glutaminase family. As to quaternary structure, homotetramer.

It carries out the reaction L-glutamine + H2O = L-glutamate + NH4(+). In Pseudomonas fluorescens (strain ATCC BAA-477 / NRRL B-23932 / Pf-5), this protein is Glutaminase.